Here is a 75-residue protein sequence, read N- to C-terminus: Putative sulfur carrier protein YrkI (75 aa).

Residue Cys14 is the Cysteine persulfide intermediate of the active site.

Belongs to the sulfur carrier protein TusA family.

The polypeptide is Putative sulfur carrier protein YrkI (yrkI) (Bacillus subtilis (strain 168)).